A 368-amino-acid chain; its full sequence is Caffeine synthase 3 (368 aa).

Tyr23 provides a ligand contact to S-adenosyl-L-homocysteine. Thr30 serves as a coordination point for caffeine. 6 residues coordinate S-adenosyl-L-homocysteine: Cys65, Asn70, Asp102, Leu103, Ser137, and Phe138. Caffeine is bound by residues Tyr155, His158, and Trp159. Asn176 provides a ligand contact to Mg(2+). A caffeine-binding site is contributed by Arg224. Mg(2+) is bound by residues Asp262, Phe264, and Asn265. Caffeine is bound at residue Phe320.

Belongs to the methyltransferase superfamily. Type-7 methyltransferase family. The cofactor is Mg(2+).

The catalysed reaction is theobromine + S-adenosyl-L-methionine = caffeine + S-adenosyl-L-homocysteine + H(+). It catalyses the reaction 7-methylxanthine + S-adenosyl-L-methionine = theobromine + S-adenosyl-L-homocysteine + H(+). The protein operates within alkaloid biosynthesis. In terms of biological role, involved in the biosynthesis of caffeine. Catalyzes the conversion of 7-methylxanthine (7mX) to theobromine and of theobromine to caffeine. The chain is Caffeine synthase 3 from Camellia sinensis (Tea plant).